The primary structure comprises 503 residues: Aspartyl/glutamyl-tRNA(Asn/Gln) amidotransferase subunit B (503 aa).

It belongs to the GatB/GatE family. GatB subfamily. As to quaternary structure, heterotrimer of A, B and C subunits.

The catalysed reaction is L-glutamyl-tRNA(Gln) + L-glutamine + ATP + H2O = L-glutaminyl-tRNA(Gln) + L-glutamate + ADP + phosphate + H(+). The enzyme catalyses L-aspartyl-tRNA(Asn) + L-glutamine + ATP + H2O = L-asparaginyl-tRNA(Asn) + L-glutamate + ADP + phosphate + 2 H(+). In terms of biological role, allows the formation of correctly charged Asn-tRNA(Asn) or Gln-tRNA(Gln) through the transamidation of misacylated Asp-tRNA(Asn) or Glu-tRNA(Gln) in organisms which lack either or both of asparaginyl-tRNA or glutaminyl-tRNA synthetases. The reaction takes place in the presence of glutamine and ATP through an activated phospho-Asp-tRNA(Asn) or phospho-Glu-tRNA(Gln). The polypeptide is Aspartyl/glutamyl-tRNA(Asn/Gln) amidotransferase subunit B (Mycolicibacterium smegmatis (strain ATCC 700084 / mc(2)155) (Mycobacterium smegmatis)).